The following is a 267-amino-acid chain: Malonyl-[acyl-carrier protein] O-methyltransferase (267 aa).

Belongs to the methyltransferase superfamily.

The catalysed reaction is malonyl-[ACP] + S-adenosyl-L-methionine = malonyl-[ACP] methyl ester + S-adenosyl-L-homocysteine. It functions in the pathway cofactor biosynthesis; biotin biosynthesis. Functionally, converts the free carboxyl group of a malonyl-thioester to its methyl ester by transfer of a methyl group from S-adenosyl-L-methionine (SAM). It allows to synthesize pimeloyl-ACP via the fatty acid synthetic pathway. This is Malonyl-[acyl-carrier protein] O-methyltransferase from Geobacter sulfurreducens (strain ATCC 51573 / DSM 12127 / PCA).